The chain runs to 377 residues: Erythronate-4-phosphate dehydrogenase (377 aa).

Substrate-binding residues include Ser-45 and Thr-67. NAD(+)-binding positions include Asp-147, 210 to 212 (ASR), and Asp-236. Arg-212 is an active-site residue. Residue Glu-241 is part of the active site. His-258 (proton donor) is an active-site residue. Gly-261 contacts NAD(+). Substrate is bound at residue Tyr-262.

It belongs to the D-isomer specific 2-hydroxyacid dehydrogenase family. PdxB subfamily. Homodimer.

The protein localises to the cytoplasm. The enzyme catalyses 4-phospho-D-erythronate + NAD(+) = (R)-3-hydroxy-2-oxo-4-phosphooxybutanoate + NADH + H(+). It participates in cofactor biosynthesis; pyridoxine 5'-phosphate biosynthesis; pyridoxine 5'-phosphate from D-erythrose 4-phosphate: step 2/5. Its function is as follows. Catalyzes the oxidation of erythronate-4-phosphate to 3-hydroxy-2-oxo-4-phosphonooxybutanoate. The polypeptide is Erythronate-4-phosphate dehydrogenase (Aeromonas salmonicida (strain A449)).